A 237-amino-acid polypeptide reads, in one-letter code: Uridylate kinase (237 aa).

An ATP-binding site is contributed by 12 to 15 (KLSG). The involved in allosteric activation by GTP stretch occupies residues 20–25 (GENGYG). UMP is bound at residue G54. ATP-binding residues include G55 and R59. Residues D72 and 133-140 (TGNPYFST) each bind UMP. 2 residues coordinate ATP: Y166 and D169.

This sequence belongs to the UMP kinase family. As to quaternary structure, homohexamer.

Its subcellular location is the cytoplasm. The catalysed reaction is UMP + ATP = UDP + ADP. Its pathway is pyrimidine metabolism; CTP biosynthesis via de novo pathway; UDP from UMP (UMPK route): step 1/1. With respect to regulation, allosterically activated by GTP. Inhibited by UTP. Its function is as follows. Catalyzes the reversible phosphorylation of UMP to UDP. The protein is Uridylate kinase of Clostridium tetani (strain Massachusetts / E88).